The chain runs to 282 residues: HTH-type transcriptional activator RhaR (282 aa).

The 99-residue stretch at 179-277 (DKLITRLAAS…GMTPSQWRHL (99 aa)) folds into the HTH araC/xylS-type domain. 2 DNA-binding regions (H-T-H motif) span residues 196 to 217 (DKFCDEASCSERVLRQQFRQQT) and 244 to 267 (ISDISTECGFEDSNYFSVVFTRET).

Binds DNA as a dimer.

Its subcellular location is the cytoplasm. Its function is as follows. Activates expression of the rhaSR operon in response to L-rhamnose. The protein is HTH-type transcriptional activator RhaR of Escherichia coli O139:H28 (strain E24377A / ETEC).